A 121-amino-acid polypeptide reads, in one-letter code: Large ribosomal subunit protein uL18 (121 aa).

Belongs to the universal ribosomal protein uL18 family. Part of the 50S ribosomal subunit; part of the 5S rRNA/L5/L18/L25 subcomplex. Contacts the 5S and 23S rRNAs.

This is one of the proteins that bind and probably mediate the attachment of the 5S RNA into the large ribosomal subunit, where it forms part of the central protuberance. The sequence is that of Large ribosomal subunit protein uL18 from Streptococcus thermophilus (strain CNRZ 1066).